Reading from the N-terminus, the 480-residue chain is Carboxy-terminal processing protease CtpB (480 aa).

A signal peptide spans 1-23 (MNQKIMAVIAAGSMLFGGAGVYA). One can recognise a PDZ domain in the interval 92–182 (SVYMDKQTAK…SSVSMKIQRP (91 aa)). Positions 113–116 (GIGA) are peptide binding. The Nucleophile role is filled by serine 309. Active-site charge relay system residues include lysine 334 and glutamine 338.

It belongs to the peptidase S41A family. In terms of assembly, homodimer. In terms of processing, is cleaved by SpoIVB in vitro and in vivo but this cleavage does not appear to be necessary for CtpB activation. CtpB can also cleave itself in vivo.

It localises to the forespore intermembrane space. The catalysed reaction is The enzyme shows specific recognition of a C-terminal tripeptide, Xaa-Yaa-Zaa, in which Xaa is preferably Ala or Leu, Yaa is preferably Ala or Tyr, and Zaa is preferably Ala, but then cleaves at a variable distance from the C-terminus. A typical cleavage is -Ala-Ala-|-Arg-Ala-Ala-Lys-Glu-Asn-Tyr-Ala-Leu-Ala-Ala.. With respect to regulation, activated by peptide binding to the PDZ domain. Its function is as follows. Involved in the signal transduction pathway leading to the proteolytic activation of the mother cell transcription factor pro-sigma-K during sporulation. The signaling serine protease CtpB triggers pro-sigma-K processing by cleaving the pre-processed regulatory protein SpoIVFA and is necessary for the proper timing of sigma-K activation. The sequence is that of Carboxy-terminal processing protease CtpB (ctpB) from Bacillus subtilis (strain 168).